Here is a 287-residue protein sequence, read N- to C-terminus: ATP phosphoribosyltransferase (287 aa).

This sequence belongs to the ATP phosphoribosyltransferase family. Long subfamily. Mg(2+) is required as a cofactor.

It localises to the cytoplasm. It carries out the reaction 1-(5-phospho-beta-D-ribosyl)-ATP + diphosphate = 5-phospho-alpha-D-ribose 1-diphosphate + ATP. It participates in amino-acid biosynthesis; L-histidine biosynthesis; L-histidine from 5-phospho-alpha-D-ribose 1-diphosphate: step 1/9. Its activity is regulated as follows. Feedback inhibited by histidine. Functionally, catalyzes the condensation of ATP and 5-phosphoribose 1-diphosphate to form N'-(5'-phosphoribosyl)-ATP (PR-ATP). Has a crucial role in the pathway because the rate of histidine biosynthesis seems to be controlled primarily by regulation of HisG enzymatic activity. This is ATP phosphoribosyltransferase (hisG) from Methanothermobacter thermautotrophicus (strain ATCC 29096 / DSM 1053 / JCM 10044 / NBRC 100330 / Delta H) (Methanobacterium thermoautotrophicum).